The sequence spans 312 residues: Glycerol-3-phosphate dehydrogenase [NAD(P)+] (312 aa).

Residues tryptophan 11, arginine 30, arginine 31, and lysine 95 each coordinate NADPH. The sn-glycerol 3-phosphate site is built by lysine 95, glycine 123, and serine 125. Alanine 127 contacts NADPH. Positions 177, 230, 240, 241, and 242 each coordinate sn-glycerol 3-phosphate. Lysine 177 (proton acceptor) is an active-site residue. Arginine 241 contacts NADPH. NADPH-binding residues include valine 265 and glutamate 267.

The protein belongs to the NAD-dependent glycerol-3-phosphate dehydrogenase family.

The protein resides in the cytoplasm. The catalysed reaction is sn-glycerol 3-phosphate + NAD(+) = dihydroxyacetone phosphate + NADH + H(+). It catalyses the reaction sn-glycerol 3-phosphate + NADP(+) = dihydroxyacetone phosphate + NADPH + H(+). Its pathway is membrane lipid metabolism; glycerophospholipid metabolism. In terms of biological role, catalyzes the reduction of the glycolytic intermediate dihydroxyacetone phosphate (DHAP) to sn-glycerol 3-phosphate (G3P), the key precursor for phospholipid synthesis. The protein is Glycerol-3-phosphate dehydrogenase [NAD(P)+] of Helicobacter pylori (strain HPAG1).